The primary structure comprises 359 residues: Methylthioribose-1-phosphate isomerase (359 aa).

Residues 52–54 (RGA), R90, and Q200 contribute to the substrate site. The Proton donor role is filled by D241. 251 to 252 (NK) contributes to the substrate binding site.

Belongs to the eIF-2B alpha/beta/delta subunits family. MtnA subfamily.

It carries out the reaction 5-(methylsulfanyl)-alpha-D-ribose 1-phosphate = 5-(methylsulfanyl)-D-ribulose 1-phosphate. Its pathway is amino-acid biosynthesis; L-methionine biosynthesis via salvage pathway; L-methionine from S-methyl-5-thio-alpha-D-ribose 1-phosphate: step 1/6. Its function is as follows. Catalyzes the interconversion of methylthioribose-1-phosphate (MTR-1-P) into methylthioribulose-1-phosphate (MTRu-1-P). This chain is Methylthioribose-1-phosphate isomerase, found in Sulfurimonas denitrificans (strain ATCC 33889 / DSM 1251) (Thiomicrospira denitrificans (strain ATCC 33889 / DSM 1251)).